The primary structure comprises 96 residues: Exodeoxyribonuclease 7 small subunit (96 aa).

Basic and acidic residues predominate over residues Ala-61–Ser-79. Positions Ala-61–Phe-96 are disordered. Positions Lys-80–Ser-89 are enriched in low complexity.

This sequence belongs to the XseB family. In terms of assembly, heterooligomer composed of large and small subunits.

The protein localises to the cytoplasm. The catalysed reaction is Exonucleolytic cleavage in either 5'- to 3'- or 3'- to 5'-direction to yield nucleoside 5'-phosphates.. Functionally, bidirectionally degrades single-stranded DNA into large acid-insoluble oligonucleotides, which are then degraded further into small acid-soluble oligonucleotides. The protein is Exodeoxyribonuclease 7 small subunit of Leptospira borgpetersenii serovar Hardjo-bovis (strain JB197).